Consider the following 205-residue polypeptide: Holliday junction branch migration complex subunit RuvA (205 aa).

The segment at 1 to 64 (MIGKLKGLID…EDQIKLFGFR (64 aa)) is domain I. Positions 65–143 (SDVEREWFRL…AFADVDPGVI (79 aa)) are domain II. Positions 144–154 (RLSGAIEDSRA) are flexible linker. Positions 154–205 (APQPIADAISALINLGYGQPQAAAAIAAASRAAGDKAETAQLIRLGLKELAK) are domain III.

Belongs to the RuvA family. In terms of assembly, homotetramer. Forms an RuvA(8)-RuvB(12)-Holliday junction (HJ) complex. HJ DNA is sandwiched between 2 RuvA tetramers; dsDNA enters through RuvA and exits via RuvB. An RuvB hexamer assembles on each DNA strand where it exits the tetramer. Each RuvB hexamer is contacted by two RuvA subunits (via domain III) on 2 adjacent RuvB subunits; this complex drives branch migration. In the full resolvosome a probable DNA-RuvA(4)-RuvB(12)-RuvC(2) complex forms which resolves the HJ.

It is found in the cytoplasm. Functionally, the RuvA-RuvB-RuvC complex processes Holliday junction (HJ) DNA during genetic recombination and DNA repair, while the RuvA-RuvB complex plays an important role in the rescue of blocked DNA replication forks via replication fork reversal (RFR). RuvA specifically binds to HJ cruciform DNA, conferring on it an open structure. The RuvB hexamer acts as an ATP-dependent pump, pulling dsDNA into and through the RuvAB complex. HJ branch migration allows RuvC to scan DNA until it finds its consensus sequence, where it cleaves and resolves the cruciform DNA. This is Holliday junction branch migration complex subunit RuvA from Bradyrhizobium sp. (strain BTAi1 / ATCC BAA-1182).